Reading from the N-terminus, the 340-residue chain is Erythroferrone (340 aa).

A signal peptide spans 1 to 24; the sequence is MASTRRPVGARTLLACASLLAAMG. Disordered stretches follow at residues 30–63, 79–112, and 141–161; these read SAEPVGTHARPQPPGAELPAPPANSPPEPTIAHA, SDKGINSKRRSKARRLKLGLPGPPGPPGPQGPPG, and HCTRDLTTPASGSPSRVPAAQ. Positions 40 to 58 are enriched in pro residues; that stretch reads PQPPGAELPAPPANSPPEP. The segment covering 84 to 95 has biased composition (basic residues); it reads NSKRRSKARRLK. Residues P99, P101, P102, P104, P105, and P107 each carry the hydroxyproline modification. A compositionally biased stretch (pro residues) spans 99 to 112; sequence PGPPGPPGPQGPPG. Over residues 145 to 154 the composition is skewed to polar residues; the sequence is DLTTPASGSP. The C1q domain maps to 185–340; it reads APRVEAAFHC…SHFSAILLGL (156 aa). Residues N229, N281, N292, and N319 are each glycosylated (N-linked (GlcNAc...) asparagine).

The protein belongs to the adipolin/erythroferrone family. As to quaternary structure, homodimer; disulfide-linked. Forms trimer, hexamers and higher molecular weight oligomers. May form heteromeric complexes with C1QTNF2 and C1QTNF12 and, to a lesser extent, with C1QTNF5 and C1QTNF10. Interacts with BMP5 and BMP7; the interaction inhibits BMP-induced transcription of HAMP. Interacts with BMP6; the interaction inhibits BMP-induced transcription of HAMP. Interacts with BMP2. Interacts with heterodimers composed of BMP2 and BMP6 in vitro, the interaction inhibits the heterodimer binding to its receptor BMPR1A /ALK3 and thereby suppresses expression of HAMP. N-glycosylated; required for secretion of the mature protein. As to expression, expressed in the soleus muscle in the leg (at protein level). Found in blood (at protein level). Weakly expressed in the heart (at protein level). Predominantly expressed in skeletal muscle and, at much lower levels, in other tissues, including lung, eye, smooth muscle, brain and kidney. Within skeletal muscles, higher expression levels in soleus as compared with plantaris. Expressed in osteoblasts, mature osteoclasts and erythroblasts. When fasting, females tend to have higher circulating levels than males. Obese mice tend to have lower expression and circulating levels as compared to lean animals. Following EPO treatment, only expressed in bone marrow and spleen.

The protein localises to the secreted. Its function is as follows. Iron-regulatory hormone that acts as an erythroid regulator after hemorrhage: produced by erythroblasts following blood loss and mediates suppression of hepcidin (HAMP) expression in the liver, thereby promoting increased iron absorption and mobilization from stores. Promotes lipid uptake into adipocytes and hepatocytes via transcriptional up-regulation of genes involved in fatty acid uptake. Inhibits apoptosis and inflammatory response in cardiomyocytes via promotion of sphingosine-1-phosphate (S1P) and cAMP-dependent activation of AKT signaling. Inhibits autophagy induced by nutrient deficiency in hepatocytes via promoting the phosphorylation of IRS1, AKT, and MTOR, and thereby subsequent activation of the AKT-MTOR signaling pathway. Negatively regulates the differentiation of osteoblasts, potentially via sequestering BMP2, and thereby inhibits the activation of SMAD signaling. The reduction in BMP2 signaling in osteoblasts also results in an increase in expression of the osteoclastogenesis-promoting factors TNFSF11/RANKL and SOST, thereby indirectly promotes bone resorption. The polypeptide is Erythroferrone (Mus musculus (Mouse)).